Reading from the N-terminus, the 367-residue chain is Chorismate synthase (367 aa).

The segment at 41–60 is disordered; sequence FTHDLQRRASGKSRHTSARR. Arg48 and Arg54 together coordinate NADP(+). Residues 125 to 127, 238 to 239, Gly278, 293 to 297, and Arg319 each bind FMN; these read RSS, NA, and KPTSS.

It belongs to the chorismate synthase family. Homotetramer. The cofactor is FMNH2.

The catalysed reaction is 5-O-(1-carboxyvinyl)-3-phosphoshikimate = chorismate + phosphate. It participates in metabolic intermediate biosynthesis; chorismate biosynthesis; chorismate from D-erythrose 4-phosphate and phosphoenolpyruvate: step 7/7. Functionally, catalyzes the anti-1,4-elimination of the C-3 phosphate and the C-6 proR hydrogen from 5-enolpyruvylshikimate-3-phosphate (EPSP) to yield chorismate, which is the branch point compound that serves as the starting substrate for the three terminal pathways of aromatic amino acid biosynthesis. This reaction introduces a second double bond into the aromatic ring system. This is Chorismate synthase from Xanthomonas axonopodis pv. citri (strain 306).